The primary structure comprises 525 residues: GMP synthase [glutamine-hydrolyzing] (525 aa).

A Glutamine amidotransferase type-1 domain is found at 9 to 207 (RILILDFGSQ…VRDICQCEAL (199 aa)). The active-site Nucleophile is Cys86. Active-site residues include His181 and Glu183. The GMPS ATP-PPase domain occupies 208–400 (WTPAKIIDDA…LGLPYDMLYR (193 aa)). Residue 235–241 (SGGVDSS) participates in ATP binding.

As to quaternary structure, homodimer.

It catalyses the reaction XMP + L-glutamine + ATP + H2O = GMP + L-glutamate + AMP + diphosphate + 2 H(+). The protein operates within purine metabolism; GMP biosynthesis; GMP from XMP (L-Gln route): step 1/1. Its function is as follows. Catalyzes the synthesis of GMP from XMP. The sequence is that of GMP synthase [glutamine-hydrolyzing] from Escherichia coli O8 (strain IAI1).